The sequence spans 144 residues: MIALIQRVSEAAVRVDGEVVGQIDKGLLVLLGVEKDDDEAKAKRLMERVTTYRVFEDSEGKMNLNVQQVDGKVLVVSQFTLPADTKKGTRAGFSRGAHPADAERLYDYFSDLCQQVLPTERGRFAADMKVSLINDGPVTFWLQV.

Positions 136–137 (GP) match the Gly-cisPro motif, important for rejection of L-amino acids motif.

Belongs to the DTD family. As to quaternary structure, homodimer.

The protein localises to the cytoplasm. The enzyme catalyses glycyl-tRNA(Ala) + H2O = tRNA(Ala) + glycine + H(+). The catalysed reaction is a D-aminoacyl-tRNA + H2O = a tRNA + a D-alpha-amino acid + H(+). An aminoacyl-tRNA editing enzyme that deacylates mischarged D-aminoacyl-tRNAs. Also deacylates mischarged glycyl-tRNA(Ala), protecting cells against glycine mischarging by AlaRS. Acts via tRNA-based rather than protein-based catalysis; rejects L-amino acids rather than detecting D-amino acids in the active site. By recycling D-aminoacyl-tRNA to D-amino acids and free tRNA molecules, this enzyme counteracts the toxicity associated with the formation of D-aminoacyl-tRNA entities in vivo and helps enforce protein L-homochirality. The sequence is that of D-aminoacyl-tRNA deacylase from Vibrio vulnificus (strain CMCP6).